The following is a 274-amino-acid chain: Reaction center protein L chain (274 aa).

The Cytoplasmic portion of the chain corresponds to 2–32 (ALLSFERKYRVRGGTLIGGDLFDFWVGPYFV). The helical transmembrane segment at 33–53 (GFFGVSAIFFIFLGVSLIGYA) threads the bilayer. The Periplasmic portion of the chain corresponds to 54 to 83 (ASQGPTWDPFAISINPPDLKYGLGAAPLLE). Residues 84–111 (GGFWQAITVCALGAFISWMLREVEISRK) form a helical membrane-spanning segment. Over 112–115 (LGIG) the chain is Cytoplasmic. A helical membrane pass occupies residues 116 to 139 (WHVPLAFCVPIFMFCVLQVFRPLL). The Periplasmic portion of the chain corresponds to 140 to 170 (LGSWGHAFPYGILSHLDWVNNFGYQYLNWHY). The (7R,8Z)-bacteriochlorophyll b site is built by H154 and H174. The helical transmembrane segment at 171–198 (NPGHMSSVSFLFVNAMALGLHGGLILSV) threads the bilayer. H191 is a Fe cation binding site. Topologically, residues 199–225 (ANPGDGDKVKTAEHENQYFRDVVGYSI) are cytoplasmic. F217 lines the a ubiquinone pocket. Residues 226 to 249 (GALSIHRLGLFLASNIFLTGAFGT) traverse the membrane as a helical segment. H231 lines the Fe cation pocket. At 250–274 (IASGPFWTRGWPEWWGWWLDIPFWS) the chain is on the periplasmic side.

It belongs to the reaction center PufL/M/PsbA/D family. In terms of assembly, reaction center is composed of four bacteriochlorophylls, two bacteriopheophytins, two ubiquinones, one iron, and three highly hydrophobic polypeptide chains (designated L, M, and H).

It localises to the cellular chromatophore membrane. Functionally, the reaction center is a membrane-bound complex that mediates the initial photochemical event in the electron transfer process of photosynthesis. The protein is Reaction center protein L chain (pufL) of Blastochloris viridis (Rhodopseudomonas viridis).